A 421-amino-acid polypeptide reads, in one-letter code: MDAEAARSYSLEQVQALYSFPFQQMMAEVPNMAVTTGQQVPAVAPNMATVTEQQVPEDAPVQEPAPEAPKRRKRKPRAAEPQEPVEPKKPATSKKSGKSTKSKEKQEKITDAFKVKRKVDRFNGVSEAELLTKTLPDILTFNLDIVIIGINPGLMAAYKGHHYPGPGNHFWKCLFMSGLSEVQLNHMDDHTLPGKYGIGFTNMVERTTPGSKDLSSKEFREGGRILVQKLQKYQPRIAVFNGKCIYEIFSKEVFGVKVKNLEFGLQPHKIPDTETLCYVMPSSSARCAQFPRAQDKVHYYIKLKDLRDQLKGIERNADVQEVQYTFDLQLAQEDAKKMAVKEEKYDPGYEAAYGGAYGENPCNGEPCGIASNGLTAHSAEPRGEAAPSDVPNGQWMAQSFAEQIPSFNNCGTREQEEESHA.

A disordered region spans residues 45–108; that stretch reads PNMATVTEQQ…STKSKEKQEK (64 aa). Residues 77 to 89 are compositionally biased toward basic and acidic residues; sequence RAAEPQEPVEPKK. Residues 91 to 100 show a composition bias toward basic residues; the sequence is ATSKKSGKST. Residues Lys114 and Lys259 each participate in a glycyl lysine isopeptide (Lys-Gly) (interchain with G-Cter in SUMO2) cross-link. Lys341 is covalently cross-linked (Glycyl lysine isopeptide (Lys-Gly) (interchain with G-Cter in SUMO); alternate). Lys341 participates in a covalent cross-link: Glycyl lysine isopeptide (Lys-Gly) (interchain with G-Cter in SUMO2); alternate.

Belongs to the uracil-DNA glycosylase (UDG) superfamily. TDG/mug family. In terms of assembly, homodimer. Interacts with AICDA and GADD45A. In terms of processing, sumoylation on Lys-341 by either SUMO1 or SUMO2 induces dissociation of the product DNA.

It localises to the nucleus. The catalysed reaction is Hydrolyzes mismatched double-stranded DNA and polynucleotides, releasing free thymine.. Functionally, DNA glycosylase that plays a key role in active DNA demethylation: specifically recognizes and binds 5-formylcytosine (5fC) and 5-carboxylcytosine (5caC) in the context of CpG sites and mediates their excision through base-excision repair (BER) to install an unmethylated cytosine. Cannot remove 5-hydroxymethylcytosine (5hmC). According to an alternative model, involved in DNA demethylation by mediating DNA glycolase activity toward 5-hydroxymethyluracil (5hmU) produced by deamination of 5hmC. Also involved in DNA repair by acting as a thymine-DNA glycosylase that mediates correction of G/T mispairs to G/C pairs: in the DNA of higher eukaryotes, hydrolytic deamination of 5-methylcytosine to thymine leads to the formation of G/T mismatches. Its role in the repair of canonical base damage is however minor compared to its role in DNA demethylation. It is capable of hydrolyzing the carbon-nitrogen bond between the sugar-phosphate backbone of the DNA and a mispaired thymine. In addition to the G/T, it can remove thymine also from C/T and T/T mispairs in the order G/T &gt;&gt; C/T &gt; T/T. It has no detectable activity on apyrimidinic sites and does not catalyze the removal of thymine from A/T pairs or from single-stranded DNA. It can also remove uracil and 5-bromouracil from mispairs with guanine. The sequence is that of G/T mismatch-specific thymine DNA glycosylase (Tdg) from Mus musculus (Mouse).